Consider the following 171-residue polypeptide: Transcriptional repressor NrdR (171 aa).

Over residues 1-10 (MQCPHCHHNG) the composition is skewed to basic residues. The segment at 1-21 (MQCPHCHHNGSRVVDSRPTDD) is disordered. The segment at 3–34 (CPHCHHNGSRVVDSRPTDDGRVIRRRRECENC) is a zinc-finger region. The 91-residue stretch at 49 to 139 (LLVIKKNGAR…VYRQFKDMHV (91 aa)) folds into the ATP-cone domain. A disordered region spans residues 152–171 (KVKLAKPSAKTTHAPKRKKD).

Belongs to the NrdR family. It depends on Zn(2+) as a cofactor.

Functionally, negatively regulates transcription of bacterial ribonucleotide reductase nrd genes and operons by binding to NrdR-boxes. This chain is Transcriptional repressor NrdR, found in Lactiplantibacillus plantarum (strain ATCC BAA-793 / NCIMB 8826 / WCFS1) (Lactobacillus plantarum).